The sequence spans 171 residues: 6,7-dimethyl-8-ribityllumazine synthase (171 aa).

5-amino-6-(D-ribitylamino)uracil contacts are provided by residues phenylalanine 24, 58-60, and 82-84; these read ALE and AVI. 87–88 contributes to the (2S)-2-hydroxy-3-oxobutyl phosphate binding site; the sequence is ET. Histidine 90 serves as the catalytic Proton donor. Asparagine 115 lines the 5-amino-6-(D-ribitylamino)uracil pocket. A (2S)-2-hydroxy-3-oxobutyl phosphate-binding site is contributed by arginine 129. Positions 150–171 are disordered; sequence ALDQLGDDEDEEEDEEDEEERA. Residues 154-171 show a composition bias toward acidic residues; it reads LGDDEDEEEDEEDEEERA.

Belongs to the DMRL synthase family.

It carries out the reaction (2S)-2-hydroxy-3-oxobutyl phosphate + 5-amino-6-(D-ribitylamino)uracil = 6,7-dimethyl-8-(1-D-ribityl)lumazine + phosphate + 2 H2O + H(+). Its pathway is cofactor biosynthesis; riboflavin biosynthesis; riboflavin from 2-hydroxy-3-oxobutyl phosphate and 5-amino-6-(D-ribitylamino)uracil: step 1/2. Its function is as follows. Catalyzes the formation of 6,7-dimethyl-8-ribityllumazine by condensation of 5-amino-6-(D-ribitylamino)uracil with 3,4-dihydroxy-2-butanone 4-phosphate. This is the penultimate step in the biosynthesis of riboflavin. This chain is 6,7-dimethyl-8-ribityllumazine synthase, found in Burkholderia ambifaria (strain MC40-6).